The chain runs to 42 residues: Photosystem II reaction center protein J (42 aa).

Residues 10-30 (IPLWLVGTVVGLLAIGLLALF) form a helical membrane-spanning segment.

Belongs to the PsbJ family. PSII is composed of 1 copy each of membrane proteins PsbA, PsbB, PsbC, PsbD, PsbE, PsbF, PsbH, PsbI, PsbJ, PsbK, PsbL, PsbM, PsbT, PsbX, PsbY, PsbZ, Psb30/Ycf12, at least 3 peripheral proteins of the oxygen-evolving complex and a large number of cofactors. It forms dimeric complexes.

It localises to the plastid. The protein resides in the chloroplast thylakoid membrane. Its function is as follows. One of the components of the core complex of photosystem II (PSII). PSII is a light-driven water:plastoquinone oxidoreductase that uses light energy to abstract electrons from H(2)O, generating O(2) and a proton gradient subsequently used for ATP formation. It consists of a core antenna complex that captures photons, and an electron transfer chain that converts photonic excitation into a charge separation. In Mesostigma viride (Green alga), this protein is Photosystem II reaction center protein J.